Here is a 610-residue protein sequence, read N- to C-terminus: MSDQFDAKAFLKTVTSQPGVYRMYDAGGTVIYVGKAKDLKKRLSSYFRSNLASRKTEALVAQIQQIDVTVTHTETEALLLEHNYIKLYQPRYNVLLRDDKSYPFIFLSGDTHPRLAMHRGAKHAKGEYFGPFPNGYAVRETLALLQKIFPIRQCENSVYRNRSRPCLQYQIGRCLGPCVEGLVSEEEYAQQVEYVRLFLSGKDDQVLTQLISRMETASQNLEFEEAARIRDQIQAVRRVTEKQFVSNTGDDLDVIGVAFDAGMACVHVLFIRQGKVLGSRSYFPKVPGSTELSEVVETFVGQFYLQGSQMRTLPGEILLDFNLSDKTLLADSLSELAGRKINVQTKPRGDRARYLKLARTNAATALTSKLSQQSTVHQRLTALASVLKLPEVKRMECFDISHTMGEQTVASCVVFDANGPLRAEYRRYNITGITPGDDYAAMHQVLRRRYGKAIDDSKIPDVILIDGGKGQLAQAKNVFAELDVSWDKNHPLLLGVAKGADRKAGLETLFFEPEGEGFSLPPDSPALHVIQHIRDESHDHAIGGHRKKRAKVKNTSSLETIEGIGPKRRQMLLKYMGGLQGLRNASVEEIAKVPGISQGLAEKIFWSLKH.

The GIY-YIG domain occupies serine 16–valine 94. One can recognise a UVR domain in the interval aspartate 204–valine 239.

The protein belongs to the UvrC family. In terms of assembly, interacts with UvrB in an incision complex.

Its subcellular location is the cytoplasm. Its function is as follows. The UvrABC repair system catalyzes the recognition and processing of DNA lesions. UvrC both incises the 5' and 3' sides of the lesion. The N-terminal half is responsible for the 3' incision and the C-terminal half is responsible for the 5' incision. In Escherichia coli O45:K1 (strain S88 / ExPEC), this protein is UvrABC system protein C.